The following is a 255-amino-acid chain: Taurine import ATP-binding protein TauB (255 aa).

In terms of domain architecture, ABC transporter spans 2–229; that stretch reads LQISHLYADY…RFVAGESSRS (228 aa). 34–41 is an ATP binding site; the sequence is GPSGCGKT.

This sequence belongs to the ABC transporter superfamily. Taurine importer (TC 3.A.1.17.1) family. In terms of assembly, the complex is composed of two ATP-binding proteins (TauB), two transmembrane proteins (TauC) and a solute-binding protein (TauA).

Its subcellular location is the cell inner membrane. It catalyses the reaction taurine(out) + ATP + H2O = taurine(in) + ADP + phosphate + H(+). In terms of biological role, part of the ABC transporter complex TauABC involved in taurine import. Responsible for energy coupling to the transport system. This Escherichia coli (strain K12) protein is Taurine import ATP-binding protein TauB.